The chain runs to 168 residues: S-ribosylhomocysteine lyase (168 aa).

Histidine 54, histidine 58, and cysteine 128 together coordinate Fe cation.

This sequence belongs to the LuxS family. Homodimer. It depends on Fe cation as a cofactor.

It carries out the reaction S-(5-deoxy-D-ribos-5-yl)-L-homocysteine = (S)-4,5-dihydroxypentane-2,3-dione + L-homocysteine. Functionally, involved in the synthesis of autoinducer 2 (AI-2) which is secreted by bacteria and is used to communicate both the cell density and the metabolic potential of the environment. The regulation of gene expression in response to changes in cell density is called quorum sensing. Catalyzes the transformation of S-ribosylhomocysteine (RHC) to homocysteine (HC) and 4,5-dihydroxy-2,3-pentadione (DPD). The sequence is that of S-ribosylhomocysteine lyase from Neisseria meningitidis serogroup C (strain 053442).